We begin with the raw amino-acid sequence, 431 residues long: Protein farnesyltransferase subunit beta (431 aa).

PFTB repeat units lie at residues 130–171 (KRKI…SLCD), 182–224 (RKGI…TLLN), 231–273 (TEGV…AILR), 280–322 (VEKL…AILE), and 332–375 (KHAL…AVAE). (2E,6E)-farnesyl diphosphate-binding positions include 258–261 (HGGY) and 301–304 (RSNK). Asp307 and Cys309 together coordinate Zn(2+). 310 to 313 (YSFW) lines the (2E,6E)-farnesyl diphosphate pocket. His363 provides a ligand contact to Zn(2+).

It belongs to the protein prenyltransferase subunit beta family. Heterodimer of an alpha (RAM2) and a beta (RAM1) subunit. Zn(2+) is required as a cofactor.

Its subcellular location is the cytoplasm. The catalysed reaction is L-cysteinyl-[protein] + (2E,6E)-farnesyl diphosphate = S-(2E,6E)-farnesyl-L-cysteinyl-[protein] + diphosphate. Its function is as follows. Catalyzes the transfer of a farnesyl moiety from farnesyl diphosphate to a cysteine at the fourth position from the C-terminus of several proteins having the C-terminal sequence Cys-aliphatic-aliphatic-X where X is Ser, Ala, Met, Cys, or Gln. Required for the membrane localization of proteins such as a-factor, Ras proteins and other membrane proteins containing the C-terminal CAAX motif. The beta subunit is responsible for isoprenoid and peptide-binding. The protein is Protein farnesyltransferase subunit beta of Saccharomyces cerevisiae (strain ATCC 204508 / S288c) (Baker's yeast).